The chain runs to 377 residues: Phospho-N-acetylmuramoyl-pentapeptide-transferase (377 aa).

Helical transmembrane passes span 2–22, 55–75, 82–102, 122–142, 162–182, 195–215, 236–256, 263–283, 288–308, and 343–363; these read IQLL…TPAL, VAIL…SVLA, ITLS…VGFL, MVLQ…FPDA, LAFA…NLIA, LDGL…LITL, PMDL…FLWW, IFMG…FAVL, LLLV…ILQV, and FWVI…GDWL.

This sequence belongs to the glycosyltransferase 4 family. MraY subfamily. Mg(2+) is required as a cofactor.

The protein localises to the cell membrane. It carries out the reaction UDP-N-acetyl-alpha-D-muramoyl-L-alanyl-gamma-D-glutamyl-meso-2,6-diaminopimeloyl-D-alanyl-D-alanine + di-trans,octa-cis-undecaprenyl phosphate = di-trans,octa-cis-undecaprenyl diphospho-N-acetyl-alpha-D-muramoyl-L-alanyl-D-glutamyl-meso-2,6-diaminopimeloyl-D-alanyl-D-alanine + UMP. It participates in cell wall biogenesis; peptidoglycan biosynthesis. Functionally, catalyzes the initial step of the lipid cycle reactions in the biosynthesis of the cell wall peptidoglycan: transfers peptidoglycan precursor phospho-MurNAc-pentapeptide from UDP-MurNAc-pentapeptide onto the lipid carrier undecaprenyl phosphate, yielding undecaprenyl-pyrophosphoryl-MurNAc-pentapeptide, known as lipid I. The sequence is that of Phospho-N-acetylmuramoyl-pentapeptide-transferase from Kocuria rhizophila (strain ATCC 9341 / DSM 348 / NBRC 103217 / DC2201).